The chain runs to 499 residues: Glycerol kinase (499 aa).

Residue Thr-17 participates in ADP binding. Residues Thr-17, Thr-18, and Ser-19 each coordinate ATP. Residue Thr-17 participates in sn-glycerol 3-phosphate binding. Arg-21 provides a ligand contact to ADP. Positions 87, 88, 139, and 243 each coordinate sn-glycerol 3-phosphate. Positions 87, 88, 139, 243, and 244 each coordinate glycerol. Residues Thr-265 and Gly-308 each coordinate ADP. 4 residues coordinate ATP: Thr-265, Gly-308, Gln-312, and Gly-409. ADP is bound by residues Gly-409 and Asn-413.

The protein belongs to the FGGY kinase family.

The catalysed reaction is glycerol + ATP = sn-glycerol 3-phosphate + ADP + H(+). Its pathway is polyol metabolism; glycerol degradation via glycerol kinase pathway; sn-glycerol 3-phosphate from glycerol: step 1/1. Inhibited by fructose 1,6-bisphosphate (FBP). Functionally, key enzyme in the regulation of glycerol uptake and metabolism. Catalyzes the phosphorylation of glycerol to yield sn-glycerol 3-phosphate. The sequence is that of Glycerol kinase from Pseudomonas putida (strain ATCC 700007 / DSM 6899 / JCM 31910 / BCRC 17059 / LMG 24140 / F1).